Here is a 135-residue protein sequence, read N- to C-terminus: Small ribosomal subunit protein uS8 (135 aa).

This sequence belongs to the universal ribosomal protein uS8 family. Part of the 30S ribosomal subunit. Contacts proteins S5 and S12.

Its function is as follows. One of the primary rRNA binding proteins, it binds directly to 16S rRNA central domain where it helps coordinate assembly of the platform of the 30S subunit. This Parafrankia sp. (strain EAN1pec) protein is Small ribosomal subunit protein uS8.